Reading from the N-terminus, the 513-residue chain is Light-independent protochlorophyllide reductase subunit B (513 aa).

Asp-36 is a [4Fe-4S] cluster binding site. Residue Asp-299 is the Proton donor of the active site. Residue Gly-434–Met-435 participates in substrate binding.

This sequence belongs to the ChlB/BchB/BchZ family. Protochlorophyllide reductase is composed of three subunits; ChlL, ChlN and ChlB. Forms a heterotetramer of two ChlB and two ChlN subunits. [4Fe-4S] cluster serves as cofactor.

The protein resides in the plastid. Its subcellular location is the chloroplast. The catalysed reaction is chlorophyllide a + oxidized 2[4Fe-4S]-[ferredoxin] + 2 ADP + 2 phosphate = protochlorophyllide a + reduced 2[4Fe-4S]-[ferredoxin] + 2 ATP + 2 H2O. It functions in the pathway porphyrin-containing compound metabolism; chlorophyll biosynthesis (light-independent). Component of the dark-operative protochlorophyllide reductase (DPOR) that uses Mg-ATP and reduced ferredoxin to reduce ring D of protochlorophyllide (Pchlide) to form chlorophyllide a (Chlide). This reaction is light-independent. The NB-protein (ChlN-ChlB) is the catalytic component of the complex. This is Light-independent protochlorophyllide reductase subunit B from Anthoceros angustus (Hornwort).